Reading from the N-terminus, the 165-residue chain is Putative 4-hydroxy-4-methyl-2-oxoglutarate aldolase (165 aa).

Substrate-binding positions include Gly80 to Leu83 and Arg102. Asp103 provides a ligand contact to a divalent metal cation.

The protein belongs to the class II aldolase/RraA-like family. Homotrimer. A divalent metal cation serves as cofactor.

The enzyme catalyses 4-hydroxy-4-methyl-2-oxoglutarate = 2 pyruvate. The catalysed reaction is oxaloacetate + H(+) = pyruvate + CO2. Functionally, catalyzes the aldol cleavage of 4-hydroxy-4-methyl-2-oxoglutarate (HMG) into 2 molecules of pyruvate. Also contains a secondary oxaloacetate (OAA) decarboxylase activity due to the common pyruvate enolate transition state formed following C-C bond cleavage in the retro-aldol and decarboxylation reactions. The polypeptide is Putative 4-hydroxy-4-methyl-2-oxoglutarate aldolase (Cupriavidus necator (strain ATCC 17699 / DSM 428 / KCTC 22496 / NCIMB 10442 / H16 / Stanier 337) (Ralstonia eutropha)).